A 276-amino-acid chain; its full sequence is Hydroxymethylpyrimidine/phosphomethylpyrimidine kinase (276 aa).

Residue Gln-45 coordinates 4-amino-5-hydroxymethyl-2-methylpyrimidine.

The protein belongs to the ThiD family.

The enzyme catalyses 4-amino-5-hydroxymethyl-2-methylpyrimidine + ATP = 4-amino-2-methyl-5-(phosphooxymethyl)pyrimidine + ADP + H(+). The catalysed reaction is 4-amino-2-methyl-5-(phosphooxymethyl)pyrimidine + ATP = 4-amino-2-methyl-5-(diphosphooxymethyl)pyrimidine + ADP. It functions in the pathway cofactor biosynthesis; thiamine diphosphate biosynthesis; 4-amino-2-methyl-5-diphosphomethylpyrimidine from 5-amino-1-(5-phospho-D-ribosyl)imidazole: step 2/3. It participates in cofactor biosynthesis; thiamine diphosphate biosynthesis; 4-amino-2-methyl-5-diphosphomethylpyrimidine from 5-amino-1-(5-phospho-D-ribosyl)imidazole: step 3/3. Its function is as follows. Catalyzes the phosphorylation of hydroxymethylpyrimidine phosphate (HMP-P) to HMP-PP, and of HMP to HMP-P. The sequence is that of Hydroxymethylpyrimidine/phosphomethylpyrimidine kinase (thiD) from Staphylococcus aureus (strain Mu50 / ATCC 700699).